The following is a 553-amino-acid chain: Undecaprenyl phosphate-alpha-4-amino-4-deoxy-L-arabinose arabinosyl transferase (553 aa).

Transmembrane regions (helical) follow at residues 6 to 26 (ACKVGAFLMALFFVITYLLPL), 89 to 109 (FGSVFCIFISAILLYRLAMMM), 115 to 135 (IAFATSLIYISMFLVFAIGTY), 180 to 200 (FMTKGFLALAVPVIVMLPIVI), 208 to 228 (IVCFGPLAIISAIAISLPWVI), 258 to 278 (IAPFWYYIPILILGVIPWLGL), 293 to 313 (NPEMFFLLCWFVVPLLFFSIA), 317 to 337 (LPTYILPCMAPLAMMMAKFGV), 352 to 372 (GMVNVFLGLLAVIVLFAMEVV), 386 to 406 (WVLAIVAFGIWGIIGYLCFAL), and 410 to 430 (YWLLAAFCSIVVSLVIGHALP).

This sequence belongs to the glycosyltransferase 83 family.

The protein localises to the cell inner membrane. The enzyme catalyses 4-amino-4-deoxy-alpha-L-arabinopyranosyl di-trans,octa-cis-undecaprenyl phosphate + lipid IVA = lipid IIA + di-trans,octa-cis-undecaprenyl phosphate.. Its pathway is lipopolysaccharide metabolism; 4-amino-4-deoxy-beta-L-arabinose-lipid A biosynthesis. Its function is as follows. Catalyzes the transfer of the L-Ara4N moiety of the glycolipid undecaprenyl phosphate-alpha-L-Ara4N to lipid A. The modified arabinose is attached to lipid A and is required for resistance to polymyxin and cationic antimicrobial peptides. The chain is Undecaprenyl phosphate-alpha-4-amino-4-deoxy-L-arabinose arabinosyl transferase (arnT) from Photorhabdus laumondii subsp. laumondii (strain DSM 15139 / CIP 105565 / TT01) (Photorhabdus luminescens subsp. laumondii).